Reading from the N-terminus, the 498-residue chain is MRTNPTTSDPAVSIREKNNLGRIAQIIGPVLDVAFPPGKMPNIYNALVVKGRDTLGQEINVTCEVQQLLGNNRVRAVAMSATEGLKRGMDVVDMGNPLSVPVGGATLGRIFNVLGEPVDNLGPVDTSTTSPIHKSAPAFIQLDTKLSIFETGIKVVDLLAPYRRGGKIGLFGGAGVGKTSLIMELINNIAKAHGGVSVFGGVGERTREGNDLYKEMKESGVINELNLAESKVALVYGQMNEPPGARMRVGLTALTMAEYFRDVNKQDVLLFIDNIFRFVQAGSEVSALLGRMPSAVGYQPTLSTEMGTLQERITSTKKGSITSIQAVYVPADDLTDPAPATTFAHLDATTVLSRGLAAKGIYPAVDPLDSTSTMLQPRIVGEEHYETAQQVKQTLQRYKELQDIIAILGLDELSEEDRLTVARARKIERFLSQPFFVAEVFTGSPGKYVGLAETIRGFKLILSGEFDSLPEQAFYLVGNIDEATAKATNLEMESKLKK.

A Phosphothreonine modification is found at Thr6. Ser13 carries the phosphoserine modification. 172–179 (GGAGVGKT) provides a ligand contact to ATP.

It belongs to the ATPase alpha/beta chains family. As to quaternary structure, F-type ATPases have 2 components, CF(1) - the catalytic core - and CF(0) - the membrane proton channel. CF(1) has five subunits: alpha(3), beta(3), gamma(1), delta(1), epsilon(1). CF(0) has four main subunits: a(1), b(1), b'(1) and c(9-12).

It localises to the plastid. The protein resides in the chloroplast thylakoid membrane. It catalyses the reaction ATP + H2O + 4 H(+)(in) = ADP + phosphate + 5 H(+)(out). Functionally, produces ATP from ADP in the presence of a proton gradient across the membrane. The catalytic sites are hosted primarily by the beta subunits. In Raphanus sativus (Radish), this protein is ATP synthase subunit beta, chloroplastic.